The following is a 241-amino-acid chain: Tetraspanin-1 (241 aa).

The next 3 membrane-spanning stretches (helical) occupy residues Ile12–Val32, Phe53–Leu73, and Phe89–Val109. An N-linked (GlcNAc...) asparagine glycan is attached at Asn154. The chain crosses the membrane as a helical span at residues Ala212–Val232.

Belongs to the tetraspanin (TM4SF) family. In terms of assembly, interacts with SLC19A2. Interacts with NTRK1/TRKA.

The protein localises to the cell membrane. Its subcellular location is the lysosome membrane. Functionally, structural component of specialized membrane microdomains known as tetraspanin-enriched microdomains (TERMs), which act as platforms for receptor clustering and signaling. Participates thereby in diverse biological functions such as cell signal transduction, adhesion, migration and protein trafficking. Regulates neuronal differentiation in response to NGF by facilitating NGF-mediated activation of NTRK1/TRKA receptor tyrosine kinase and subsequent downstream signaling pathways. Plays a role in the inhibition of TNFalpha-induced apoptosis. Mechanistically, inhibits the NF-kappa-B signaling pathway by blocking phosphorylation of CHUK. Also promotes the stability of the thiamine transporter 1/SLC19A2 in intestinal epithelial cells leading to an increase of thiamine uptake process. The protein is Tetraspanin-1 (Tspan1) of Rattus norvegicus (Rat).